The primary structure comprises 401 residues: ATP-dependent RNA helicase eIF4A (401 aa).

The Q motif motif lies at 28–56 (DNFDDMKLKGELLRGIYAYGFERPSAIQQ). A Helicase ATP-binding domain is found at 59–229 (IMPIVTGRDC…KKFMRDPIRI (171 aa)). 72-79 (AQSGTGKT) is a binding site for ATP. A DEAD box motif is present at residues 177 to 180 (DEAD). Residues 240–401 (GIRQFYINVE…EMPLNVADLI (162 aa)) form the Helicase C-terminal domain.

This sequence belongs to the DEAD box helicase family. eIF4A subfamily. In terms of assembly, component of the eIF4F complex, which composition varies with external and internal environmental conditions. It is composed of at least eIF4A, eIF4E and eIF4G.

The protein resides in the cytoplasm. The enzyme catalyses ATP + H2O = ADP + phosphate + H(+). In terms of biological role, ATP-dependent RNA helicase which is a subunit of the eIF4F complex involved in cap recognition and is required for mRNA binding to ribosome. In the current model of translation initiation, eIF4A unwinds RNA secondary structures in the 5'-UTR of mRNAs which is necessary to allow efficient binding of the small ribosomal subunit, and subsequent scanning for the initiator codon. The sequence is that of ATP-dependent RNA helicase eIF4A (TIF1) from Cryptococcus neoformans var. neoformans serotype D (strain B-3501A) (Filobasidiella neoformans).